A 310-amino-acid polypeptide reads, in one-letter code: p-hydroxybenzoic acid efflux pump subunit AaeA (310 aa).

The chain crosses the membrane as a helical span at residues 12–32 (AITVVLVVLAFIAIFRAWSFY).

Belongs to the membrane fusion protein (MFP) (TC 8.A.1) family.

It is found in the cell inner membrane. Forms an efflux pump with AaeB. This chain is p-hydroxybenzoic acid efflux pump subunit AaeA, found in Cronobacter sakazakii (strain ATCC BAA-894) (Enterobacter sakazakii).